We begin with the raw amino-acid sequence, 361 residues long: Porphobilinogen deaminase (361 aa).

S2 is subject to N-acetylserine. Position 69 is a phosphoserine (S69). K74 is modified (N6-acetyllysine). S147 is subject to Phosphoserine. C261 carries the post-translational modification S-(dipyrrolylmethanemethyl)cysteine.

This sequence belongs to the HMBS family. As to quaternary structure, monomer. Requires dipyrromethane as cofactor.

Its subcellular location is the cytoplasm. The protein resides in the cytosol. The catalysed reaction is 4 porphobilinogen + H2O = hydroxymethylbilane + 4 NH4(+). It participates in porphyrin-containing compound metabolism; protoporphyrin-IX biosynthesis; coproporphyrinogen-III from 5-aminolevulinate: step 2/4. Functionally, as part of the heme biosynthetic pathway, catalyzes the sequential polymerization of four molecules of porphobilinogen to form hydroxymethylbilane, also known as preuroporphyrinogen. Catalysis begins with the assembly of the dipyrromethane cofactor by the apoenzyme from two molecules of porphobilinogen or from preuroporphyrinogen. The covalently linked cofactor acts as a primer, around which the tetrapyrrole product is assembled. In the last step of catalysis, the product, preuroporphyrinogen, is released, leaving the cofactor bound to the holodeaminase intact. This Mus musculus (Mouse) protein is Porphobilinogen deaminase (Hmbs).